We begin with the raw amino-acid sequence, 835 residues long: MKVLALRHSVAQVYADTQTYLHDDSKDEYENAFLISNLTAHNILYLNYSLKTLKILNKSGIAAVETQSPDELFALIRCNFTYDYENNIVYLHDYSYYTNNEIRTDQHWITKTDIIDYLLPGWKLTYVGYNGKNTRGHYNFSFSCQNAATDDDIIVEYIYSNELDFQNFMLRKIKERMTTSLPIARLSNRVFRDKLFPSIANMHKRVINVGPRNESMFTFLNFPTIKQFSNGAYIVKHTIKLKQEKWLGKRVSQFDIGQYKNMLNVVTTIYYYYNLYHSKPIIYMLGSAPSYWIYNVKQYSDFTFETWDPVDTPYSTTHHKELFFDKDVMKLKDDSVLYIDIRTDRKNMDWKEWRKVVEQQTVSNLNIAYNYLSTGKAKVCCVKLTAMDLELPITAKLLHHPTTEVRSEFYAILDVWDIITIKRFIPKGVFYAFINNITTENVFIQPPFKLKASPTDYIVALYALSNDFNSRQDVINLINKQKQSLITVRINNTFKDEPKVNFKNIYDWTFLPTDFELKDSVITSYDGCLGMFGLSLSLSSKPTGNNHLFIINGTDKYYKLDQYANHMGISRRSHQIRFSESATSYSGYIFRDLSNNNFNLIGTNVENSVSGHVYNALIYYRYNYAFDLKRWIYLHSIGKVAVEGGRYYEHAPIELIYACRSAREFAILQDDLTVLRYANEIEGYINKVYSITYADDPNYFIGITFNNIPYEYDVKVPHLTLGVLFISDNMIDEVVAVLKEMKTELFKTEISTSYNYMLFDNVYVANASGVLSTYFKLYNMFYRNHITFGQSRMFIPHITLSFSNKRTIRIESTRLKINSIYLRKIRGETVFDMSE.

The N7-methyltransferase activity stretch occupies residues 171 to 245 (RKIKERMTTS…KHTIKLKQEK (75 aa)). A 2'-O-methyltransferase activity region spans residues 246–428 (WLGKRVSQFD…ITIKRFIPKG (183 aa)). The tract at residues 429–555 (VFYAFINNIT…NHLFIINGTD (127 aa)) is N7-methyltransferase activity. Residues 556–692 (KYYKLDQYAN…GYINKVYSIT (137 aa)) form a GTase/RTPase activity region. Residues 693-835 (YADDPNYFIG…RGETVFDMSE (143 aa)) form a 2'-5'-phosphodiesterase activity region. Residues His718, Thr720, His797, and Thr799 each act as for 2'-5'-phosphodiesterase activity in the active site.

It belongs to the rotavirus VP3 family. As to quaternary structure, interacts with VP1. Interacts with VP2.

The protein resides in the virion. The catalysed reaction is a 5'-end diphospho-ribonucleoside in mRNA + GTP + H(+) = a 5'-end (5'-triphosphoguanosine)-ribonucleoside in mRNA + diphosphate. The enzyme catalyses a 5'-end (5'-triphosphoguanosine)-ribonucleoside in mRNA + S-adenosyl-L-methionine = a 5'-end (N(7)-methyl 5'-triphosphoguanosine)-ribonucleoside in mRNA + S-adenosyl-L-homocysteine. It carries out the reaction 5'-triphosphoadenylyl-(2'-&gt;5')-adenylyl-(2'-&gt;5')-adenosine + 2 H2O = 2 AMP + ATP + 2 H(+). In terms of biological role, multifunctional enzyme involved in mRNA capping. Catalyzes the formation of the 5' cap structure on the viral plus-strand transcripts. Specifically binds to GTP and displays guanylyltransferase and methyltransferase activities. Has affinity for ssRNA but not for dsRNA. Capping activity is non-specific and caps RNAs that initiate with either a G or an A residue. Together with VP1 polymerase, forms a VP1-VP3 complex positioned near the channels situated at each of the five-fold vertices of the core. Following infection, the outermost layer of the virus is lost, leaving a double-layered particle (DLP) made up of the core and VP6 shell. VP1 then catalyzes the transcription of fully conservative plus-strand genomic RNAs that are capped by VP3 and extruded through the DLP's channels into the cytoplasm where they function as mRNAs for translation of viral proteins. DLPs probably have an RNA triphosphatase activity as well, whereas open cores do not. Counteracts the host innate immune response thanks to its phosphodiesterase that degrades the 5'-triphosphorylated, 2'-5' linked adenylate oligomers produced by the host cell IFN-inducible 2',5'-oligoadenylate synthetase (OAS). The host RNaseL is therefore not activated. This Rotavirus A (strain RVA/Human/Japan/KU/1995/G1P1A[8]) (RV-A) protein is Protein VP3.